Consider the following 80-residue polypeptide: Conotoxin Cl10.1 (80 aa).

The N-terminal stretch at 1–20 (MTTLGMTMLVLLLLLPLATC) is a signal peptide. A propeptide spanning residues 21 to 36 (LGDGERSPWDSLLRAL) is cleaved from the precursor.

In terms of processing, contains 4 disulfide bonds. Expressed by the venom duct.

It is found in the secreted. In Californiconus californicus (California cone), this protein is Conotoxin Cl10.1.